A 738-amino-acid polypeptide reads, in one-letter code: Ent-kaurene synthase-like 1 (738 aa).

D487, D491, N631, D632, and E639 together coordinate Mg(2+). Positions D487–D491 match the DDXXD motif motif.

This sequence belongs to the terpene synthase family. The cofactor is Mg(2+).

The catalysed reaction is ent-copalyl diphosphate = ent-kaur-16-ene + diphosphate. It participates in secondary metabolite biosynthesis; terpenoid biosynthesis. Functionally, diterpene cyclase involved in the biosynthesis of labdane-related diterpenoids (LRDs) natural products. Catalyzes the cyclization of ent-CDP into ent-kaurene. In Ricinus communis (Castor bean), this protein is Ent-kaurene synthase-like 1.